A 294-amino-acid polypeptide reads, in one-letter code: Ribosomal RNA small subunit methyltransferase H (294 aa).

Residues 37 to 39 (GGH), aspartate 58, leucine 93, aspartate 105, and glutamine 112 contribute to the S-adenosyl-L-methionine site.

The protein belongs to the methyltransferase superfamily. RsmH family.

It localises to the cytoplasm. It catalyses the reaction cytidine(1402) in 16S rRNA + S-adenosyl-L-methionine = N(4)-methylcytidine(1402) in 16S rRNA + S-adenosyl-L-homocysteine + H(+). In terms of biological role, specifically methylates the N4 position of cytidine in position 1402 (C1402) of 16S rRNA. The polypeptide is Ribosomal RNA small subunit methyltransferase H (Fervidobacterium nodosum (strain ATCC 35602 / DSM 5306 / Rt17-B1)).